The following is a 511-amino-acid chain: Glucan endo-1,3-beta-glucosidase 1 (511 aa).

The signal sequence occupies residues 1 to 28 (MAFTSMVSTVPVLFFFFTLLLISANSSS). An N-linked (GlcNAc...) asparagine glycan is attached at Asn109. Glu137 (proton donor) is an active-site residue. Residues Asn192 and Asn274 are each glycosylated (N-linked (GlcNAc...) asparagine). The Nucleophile role is filled by Glu284. N-linked (GlcNAc...) asparagine glycans are attached at residues Asn374, Asn378, Asn407, Asn473, and Asn480. Cys382 and Cys445 form a disulfide bridge. Ala485 is lipidated: GPI-anchor amidated alanine. Positions 486–511 (AGEATSRSLSRGFCVTIMILVTFSIL) are cleaved as a propeptide — removed in mature form.

Belongs to the glycosyl hydrolase 17 family. Post-translationally, contains two additional disulfide bonds.

Its subcellular location is the cell membrane. It catalyses the reaction Hydrolysis of (1-&gt;3)-beta-D-glucosidic linkages in (1-&gt;3)-beta-D-glucans.. In Arabidopsis thaliana (Mouse-ear cress), this protein is Glucan endo-1,3-beta-glucosidase 1.